A 466-amino-acid polypeptide reads, in one-letter code: Tissue alpha-L-fucosidase (466 aa).

The N-terminal stretch at 1–31 (MRAPGMRSRPAGPALLLLLLFLGAAESVRRA) is a signal peptide. Thr170 carries the post-translational modification Phosphothreonine. 3 N-linked (GlcNAc...) asparagine glycosylation sites follow: Asn241, Asn268, and Asn382.

This sequence belongs to the glycosyl hydrolase 29 family. As to quaternary structure, homotetramer.

It is found in the lysosome. The enzyme catalyses an alpha-L-fucoside + H2O = L-fucose + an alcohol. It carries out the reaction a neolactoside IV(2)-alpha-Fuc-nLc4Cer(d18:1(4E)) + H2O = a neolactoside nLc4Cer(d18:1(4E)) + L-fucose. The catalysed reaction is a neolactoside IV(2)-alpha-Fuc-nLc4Cer(d18:0) + H2O = a neolactoside nLc4Cer(d18:0) + L-fucose. Functionally, alpha-L-fucosidase is responsible for hydrolyzing the alpha-1,6-linked fucose joined to the reducing-end N-acetylglucosamine of the carbohydrate moieties of glycoproteins. The polypeptide is Tissue alpha-L-fucosidase (Homo sapiens (Human)).